Consider the following 885-residue polypeptide: Probable LRR receptor-like serine/threonine-protein kinase At1g51820 (885 aa).

The first 20 residues, 1–20 (MERHFVFIATYLLIFHLVQA), serve as a signal peptide directing secretion. Topologically, residues 21-509 (QNQTGFISVD…GHKKKSVIVP (489 aa)) are extracellular. Asn-22, Asn-93, Asn-135, Asn-194, Asn-228, Asn-250, Asn-254, Asn-281, Asn-287, Asn-424, Asn-437, Asn-456, and Asn-461 each carry an N-linked (GlcNAc...) asparagine glycan. LRR repeat units lie at residues 403–424 (IITS…AIKN), 427–447 (HLQI…EFLA), and 451–473 (SLLV…LLQK). The chain crosses the membrane as a helical span at residues 510–530 (VVASIASIAVLIGALVLFLIL). At 531–885 (RKKRSPKVEG…FGTEVSPNAR (355 aa)) the chain is on the cytoplasmic side. The Protein kinase domain occupies 578–851 (NNFQRILGKG…QVVIELNECL (274 aa)). Residues 584–592 (LGKGGFGMV) and Lys-606 contribute to the ATP site. Tyr-651 bears the Phosphotyrosine mark. Residue Asp-703 is the Proton acceptor of the active site. The residue at position 737 (Ser-737) is a Phosphoserine. 2 positions are modified to phosphothreonine: Thr-738 and Thr-743. The residue at position 751 (Tyr-751) is a Phosphotyrosine.

It belongs to the protein kinase superfamily. Ser/Thr protein kinase family.

The protein localises to the membrane. The enzyme catalyses L-seryl-[protein] + ATP = O-phospho-L-seryl-[protein] + ADP + H(+). It carries out the reaction L-threonyl-[protein] + ATP = O-phospho-L-threonyl-[protein] + ADP + H(+). The sequence is that of Probable LRR receptor-like serine/threonine-protein kinase At1g51820 from Arabidopsis thaliana (Mouse-ear cress).